Here is a 305-residue protein sequence, read N- to C-terminus: Serine/threonine-protein kinase 16 (305 aa).

The N-myristoyl glycine moiety is linked to residue Gly-2. 2 S-palmitoyl cysteine lipidation sites follow: Cys-6 and Cys-8. Residues 20–293 form the Protein kinase domain; the sequence is YLFVQKLGEG…PVLLSQLEAL (274 aa). Residues 26-34 and Lys-49 contribute to the ATP site; that span reads LGEGGFSYV. Asp-148 functions as the Proton acceptor in the catalytic mechanism. The activation loop stretch occupies residues 166–202; sequence DLGSMNQACIQVEGSRQALALQDWAAQRCTISYRAPE. The residue at position 197 (Ser-197) is a Phosphoserine; by autocatalysis. Position 198 is a phosphotyrosine; by autocatalysis (Tyr-198).

It belongs to the protein kinase superfamily. Ser/Thr protein kinase family. As to quaternary structure, monomer. Interacts with DRG1 (via its N-terminal); the interaction phosphorylates DRG1. In terms of processing, mainly autophosphorylated on serine/threonine residues. Also autophosphorylated on Tyr-198. As to expression, expressed in heart, liver, brain, spleen, lung, skeletal muscle, kidney and testis.

The protein localises to the cytoplasm. The protein resides in the perinuclear region. Its subcellular location is the membrane. The enzyme catalyses L-seryl-[protein] + ATP = O-phospho-L-seryl-[protein] + ADP + H(+). The catalysed reaction is L-threonyl-[protein] + ATP = O-phospho-L-threonyl-[protein] + ADP + H(+). It carries out the reaction L-tyrosyl-[protein] + ATP = O-phospho-L-tyrosyl-[protein] + ADP + H(+). Functionally, membrane-associated protein kinase that phosphorylates on serine and threonine residues. In vitro substrates include DRG1, ENO1 and EIF4EBP1. Also autophosphorylates. May be involved in secretory vesicle trafficking or intracellular signaling. May have a role in regulating stromal-epithelial interactions that occur during ductal morphogenesis in the mammary gland. May be involved in TGF-beta signaling. Able to autophosphorylate on Tyr residue; it is however unclear whether it has tyrosine-protein kinase toward other proteins. The sequence is that of Serine/threonine-protein kinase 16 (Stk16) from Rattus norvegicus (Rat).